The following is a 941-amino-acid chain: Protocadherin alpha-12 (941 aa).

The N-terminal stretch at 1–29 is a signal peptide; the sequence is MVIIGPRGPGSQRLLLSLLLLAAWEVGSG. 6 Cadherin domains span residues 30–133, 134–242, 243–350, 351–455, 456–565, and 581–678; these read QLHY…PPVF, RERE…GPAF, DKPS…VPEV, MVTS…APAF, AQPE…APAL, and VPRS…APKT. The Extracellular segment spans residues 30–697; it reads QLHYSVYEEA…DPEAALVDIN (668 aa). 2 N-linked (GlcNAc...) asparagine glycosylation sites follow: Asn257 and Asn265. Asn548 is a glycosylation site (N-linked (GlcNAc...) asparagine). Residues 698–718 traverse the membrane as a helical segment; sequence VYLIIAICAVSSLLVLTLLLY. The Cytoplasmic segment spans residues 719–941; that stretch reads TALRCSAPPT…GNSTTDNSDQ (223 aa). 5 PXXP repeats span residues 734–737, 790–793, 823–826, 863–866, and 882–885; these read PGKP, PRQP, PGGP, GPGN, and PGSP. The tract at residues 734-885 is 5 X 4 AA repeats of P-X-X-P; that stretch reads PGKPTLVCSS…PDKFIIPGSP (152 aa). Residues 818-941 form a disordered region; sequence ILRAGPGGPD…GNSTTDNSDQ (124 aa). Over residues 900-914 the composition is skewed to basic and acidic residues; that stretch reads DKSDFITFGKKEETK.

The protein resides in the cell membrane. Functionally, potential calcium-dependent cell-adhesion protein. May be involved in the establishment and maintenance of specific neuronal connections in the brain. This Pan troglodytes (Chimpanzee) protein is Protocadherin alpha-12 (PCDHA12).